Here is a 118-residue protein sequence, read N- to C-terminus: RxLR effector protein PITG_19617 (118 aa).

The first 21 residues, 1 to 21, serve as a signal peptide directing secretion; that stretch reads MRAVYILAMACAATLQASSSA. Positions 50–64 match the RxLR-dEER motif; the sequence is RLLRVEDKEEETEEE.

This sequence belongs to the RxLR effector family.

The protein resides in the secreted. The protein localises to the host nucleus. It localises to the host cytoplasm. Its function is as follows. Effector that enhances P.infestans colonization of Nicotiana benthamiana leaves. This Phytophthora infestans (strain T30-4) (Potato late blight agent) protein is RxLR effector protein PITG_19617.